An 89-amino-acid chain; its full sequence is Elongation factor 1-beta (89 aa).

Belongs to the EF-1-beta/EF-1-delta family.

Its function is as follows. Promotes the exchange of GDP for GTP in EF-1-alpha/GDP, thus allowing the regeneration of EF-1-alpha/GTP that could then be used to form the ternary complex EF-1-alpha/GTP/AAtRNA. The polypeptide is Elongation factor 1-beta (Methanococcus aeolicus (strain ATCC BAA-1280 / DSM 17508 / OCM 812 / Nankai-3)).